A 396-amino-acid chain; its full sequence is Pyruvate synthase subunit PorA (396 aa).

In terms of assembly, heterotetramer of one alpha, one beta, one delta and one gamma chain.

The enzyme catalyses 2 oxidized [2Fe-2S]-[ferredoxin] + pyruvate + CoA = 2 reduced [2Fe-2S]-[ferredoxin] + acetyl-CoA + CO2 + H(+). This Pyrococcus furiosus (strain ATCC 43587 / DSM 3638 / JCM 8422 / Vc1) protein is Pyruvate synthase subunit PorA (porA).